The primary structure comprises 202 residues: ATP-dependent Clp protease proteolytic subunit (202 aa).

The active-site Nucleophile is Ser-101. The active site involves His-126.

Belongs to the peptidase S14 family. Component of the chloroplastic Clp protease core complex.

Its subcellular location is the plastid. It localises to the chloroplast stroma. It catalyses the reaction Hydrolysis of proteins to small peptides in the presence of ATP and magnesium. alpha-casein is the usual test substrate. In the absence of ATP, only oligopeptides shorter than five residues are hydrolyzed (such as succinyl-Leu-Tyr-|-NHMec, and Leu-Tyr-Leu-|-Tyr-Trp, in which cleavage of the -Tyr-|-Leu- and -Tyr-|-Trp bonds also occurs).. Functionally, cleaves peptides in various proteins in a process that requires ATP hydrolysis. Has a chymotrypsin-like activity. Plays a major role in the degradation of misfolded proteins. The polypeptide is ATP-dependent Clp protease proteolytic subunit (Acorus gramineus (Dwarf sweet flag)).